Reading from the N-terminus, the 299-residue chain is 4-diphosphocytidyl-2-C-methyl-D-erythritol kinase (299 aa).

Lys18 is a catalytic residue. Residue Pro104 to Ser114 coordinates ATP. The active site involves Asp146.

The protein belongs to the GHMP kinase family. IspE subfamily.

The enzyme catalyses 4-CDP-2-C-methyl-D-erythritol + ATP = 4-CDP-2-C-methyl-D-erythritol 2-phosphate + ADP + H(+). The protein operates within isoprenoid biosynthesis; isopentenyl diphosphate biosynthesis via DXP pathway; isopentenyl diphosphate from 1-deoxy-D-xylulose 5-phosphate: step 3/6. Functionally, catalyzes the phosphorylation of the position 2 hydroxy group of 4-diphosphocytidyl-2C-methyl-D-erythritol. This chain is 4-diphosphocytidyl-2-C-methyl-D-erythritol kinase, found in Brucella abortus biovar 1 (strain 9-941).